The chain runs to 120 residues: Large ribosomal subunit protein uL18 (120 aa).

It belongs to the universal ribosomal protein uL18 family. As to quaternary structure, part of the 50S ribosomal subunit; part of the 5S rRNA/L5/L18/L25 subcomplex. Contacts the 5S and 23S rRNAs.

Its function is as follows. This is one of the proteins that bind and probably mediate the attachment of the 5S RNA into the large ribosomal subunit, where it forms part of the central protuberance. The polypeptide is Large ribosomal subunit protein uL18 (Bartonella tribocorum (strain CIP 105476 / IBS 506)).